The chain runs to 368 residues: Agmatine deiminase (368 aa).

The active-site Amidino-cysteine intermediate is the cysteine 357.

This sequence belongs to the agmatine deiminase family. In terms of assembly, homodimer.

The enzyme catalyses agmatine + H2O = N-carbamoylputrescine + NH4(+). Its pathway is amine and polyamine biosynthesis; putrescine biosynthesis via agmatine pathway; N-carbamoylputrescine from agmatine: step 1/1. Functionally, mediates the hydrolysis of agmatine into N-carbamoylputrescine in the arginine decarboxylase (ADC) pathway of putrescine biosynthesis, a basic polyamine. The sequence is that of Agmatine deiminase from Ectopseudomonas mendocina (strain ymp) (Pseudomonas mendocina).